The chain runs to 122 residues: Small ribosomal subunit protein uS13 (122 aa).

A disordered region spans residues glycine 95 to lysine 122. The segment covering glutamine 101 to lysine 122 has biased composition (basic residues).

It belongs to the universal ribosomal protein uS13 family. In terms of assembly, part of the 30S ribosomal subunit. Forms a loose heterodimer with protein S19. Forms two bridges to the 50S subunit in the 70S ribosome.

Located at the top of the head of the 30S subunit, it contacts several helices of the 16S rRNA. In the 70S ribosome it contacts the 23S rRNA (bridge B1a) and protein L5 of the 50S subunit (bridge B1b), connecting the 2 subunits; these bridges are implicated in subunit movement. Contacts the tRNAs in the A and P-sites. This chain is Small ribosomal subunit protein uS13, found in Protochlamydia amoebophila (strain UWE25).